The following is a 515-amino-acid chain: Cytochrome P450 1A2 (515 aa).

O-linked (GlcNAc) serine glycosylation occurs at serine 69. Substrate is bound at residue phenylalanine 226. Cysteine 458 is a heme binding site.

This sequence belongs to the cytochrome P450 family. In terms of assembly, interacts with PGRMC1; the interaction requires PGRMC1 homodimerization. Heme serves as cofactor.

It localises to the endoplasmic reticulum membrane. The protein localises to the microsome membrane. It carries out the reaction an organic molecule + reduced [NADPH--hemoprotein reductase] + O2 = an alcohol + oxidized [NADPH--hemoprotein reductase] + H2O + H(+). It catalyses the reaction 17beta-estradiol + reduced [NADPH--hemoprotein reductase] + O2 = 2-hydroxy-17beta-estradiol + oxidized [NADPH--hemoprotein reductase] + H2O + H(+). The enzyme catalyses 17beta-estradiol + reduced [NADPH--hemoprotein reductase] + O2 = 4-hydroxy-17beta-estradiol + oxidized [NADPH--hemoprotein reductase] + H2O + H(+). The catalysed reaction is estrone + reduced [NADPH--hemoprotein reductase] + O2 = 2-hydroxyestrone + oxidized [NADPH--hemoprotein reductase] + H2O + H(+). It carries out the reaction estrone + reduced [NADPH--hemoprotein reductase] + O2 = 4-hydroxyestrone + oxidized [NADPH--hemoprotein reductase] + H2O + H(+). It catalyses the reaction cholesterol + reduced [NADPH--hemoprotein reductase] + O2 = 25-hydroxycholesterol + oxidized [NADPH--hemoprotein reductase] + H2O + H(+). The enzyme catalyses all-trans-retinol + reduced [NADPH--hemoprotein reductase] + O2 = all-trans-retinal + oxidized [NADPH--hemoprotein reductase] + 2 H2O + H(+). The catalysed reaction is all-trans-retinal + reduced [NADPH--hemoprotein reductase] + O2 = all-trans-retinoate + oxidized [NADPH--hemoprotein reductase] + H2O + 2 H(+). It carries out the reaction (5Z,8Z,11Z,14Z)-eicosatetraenoate + reduced [NADPH--hemoprotein reductase] + O2 = (14R,15S)-epoxy-(5Z,8Z,11Z)-eicosatrienoate + oxidized [NADPH--hemoprotein reductase] + H2O + H(+). It catalyses the reaction (5Z,8Z,11Z,14Z)-eicosatetraenoate + reduced [NADPH--hemoprotein reductase] + O2 = (14S,15R)-epoxy-(5Z,8Z,11Z)-eicosatrienoate + oxidized [NADPH--hemoprotein reductase] + H2O + H(+). The enzyme catalyses (5Z,8Z,11Z,14Z,17Z)-eicosapentaenoate + reduced [NADPH--hemoprotein reductase] + O2 = (17R,18S)-epoxy-(5Z,8Z,11Z,14Z)-eicosatetraenoate + oxidized [NADPH--hemoprotein reductase] + H2O + H(+). The catalysed reaction is (4Z,7Z,10Z,13Z,16Z,19Z)-docosahexaenoate + reduced [NADPH--hemoprotein reductase] + O2 = (19R,20S)-epoxy-(4Z,7Z,10Z,13Z,16Z)-docosapentaenoate + oxidized [NADPH--hemoprotein reductase] + H2O + H(+). It carries out the reaction (5S)-hydroperoxy-(6E,8Z,11Z,14Z)-eicosatetraenoate = 5-oxo-(6E,8Z,11Z,14Z)-eicosatetraenoate + H2O. It catalyses the reaction (12S)-hydroperoxy-(5Z,8Z,10E,14Z)-eicosatetraenoate = 12-oxo-(5Z,8Z,10E,14Z)-eicosatetraenoate + H2O. The enzyme catalyses (15S)-hydroperoxy-(5Z,8Z,11Z,13E)-eicosatetraenoate = 15-oxo-(5Z,8Z,11Z,13E)-eicosatetraenoate + H2O. The catalysed reaction is (13S)-hydroperoxy-(9Z,11E)-octadecadienoate = 13-oxo-(9Z,11E)-octadecadienoate + H2O. It carries out the reaction (5Z,8Z,11Z,14Z)-eicosatetraenoate + reduced [NADPH--hemoprotein reductase] + O2 = 13-hydroxy-(5Z,8Z,11Z,14Z)-eicosatetraenoate + oxidized [NADPH--hemoprotein reductase] + H2O + H(+). It catalyses the reaction (5Z,8Z,11Z,14Z)-eicosatetraenoate + reduced [NADPH--hemoprotein reductase] + O2 = 19-hydroxy-(5Z,8Z,11Z,14Z)-eicosatetraenoate + oxidized [NADPH--hemoprotein reductase] + H2O + H(+). The enzyme catalyses (9Z,12Z)-octadecadienoate + reduced [NADPH--hemoprotein reductase] + O2 = 11-hydroxy-(9Z,12Z)-octadecadienoate + oxidized [NADPH--hemoprotein reductase] + H2O + H(+). The protein operates within cofactor metabolism; retinol metabolism. It participates in steroid metabolism; cholesterol metabolism. It functions in the pathway lipid metabolism; arachidonate metabolism. In terms of biological role, a cytochrome P450 monooxygenase involved in the metabolism of various endogenous substrates, including fatty acids, steroid hormones and vitamins. Mechanistically, uses molecular oxygen inserting one oxygen atom into a substrate, and reducing the second into a water molecule, with two electrons provided by NADPH via cytochrome P450 reductase (NADPH--hemoprotein reductase). Catalyzes the hydroxylation of carbon-hydrogen bonds. Exhibits high catalytic activity for the formation of hydroxyestrogens from estrone (E1) and 17beta-estradiol (E2), namely 2-hydroxy E1 and E2. Metabolizes cholesterol toward 25-hydroxycholesterol, a physiological regulator of cellular cholesterol homeostasis. May act as a major enzyme for all-trans retinoic acid biosynthesis in the liver. Catalyzes two successive oxidative transformation of all-trans retinol to all-trans retinal and then to the active form all-trans retinoic acid. Primarily catalyzes stereoselective epoxidation of the last double bond of polyunsaturated fatty acids (PUFA), displaying a strong preference for the (R,S) stereoisomer. Catalyzes bisallylic hydroxylation and omega-1 hydroxylation of PUFA. May also participate in eicosanoids metabolism by converting hydroperoxide species into oxo metabolites (lipoxygenase-like reaction, NADPH-independent). Plays a role in the oxidative metabolism of xenobiotics. Catalyzes the N-hydroxylation of heterocyclic amines and the O-deethylation of phenacetin. Metabolizes caffeine via N3-demethylation. The chain is Cytochrome P450 1A2 (CYP1A2) from Cavia porcellus (Guinea pig).